The chain runs to 446 residues: Glucose-1-phosphate adenylyltransferase (446 aa).

Residues tyrosine 119, glycine 184, glutamate 199–lysine 200, and serine 217 contribute to the alpha-D-glucose 1-phosphate site.

This sequence belongs to the bacterial/plant glucose-1-phosphate adenylyltransferase family. In terms of assembly, homotetramer.

The enzyme catalyses alpha-D-glucose 1-phosphate + ATP + H(+) = ADP-alpha-D-glucose + diphosphate. It participates in glycan biosynthesis; glycogen biosynthesis. Functionally, involved in the biosynthesis of ADP-glucose, a building block required for the elongation reactions to produce glycogen. Catalyzes the reaction between ATP and alpha-D-glucose 1-phosphate (G1P) to produce pyrophosphate and ADP-Glc. This is Glucose-1-phosphate adenylyltransferase from Rhodopirellula baltica (strain DSM 10527 / NCIMB 13988 / SH1).